The following is a 226-amino-acid chain: ATP-dependent dethiobiotin synthetase BioD (226 aa).

G12 to V17 is a binding site for ATP. Residue T16 coordinates Mg(2+). K37 is a catalytic residue. T41 provides a ligand contact to substrate. ATP is bound by residues D49, E108–G111, G169–S170, and P197–G199. Residues D49 and E108 each coordinate Mg(2+).

Belongs to the dethiobiotin synthetase family. As to quaternary structure, homodimer. Requires Mg(2+) as cofactor.

It is found in the cytoplasm. The catalysed reaction is (7R,8S)-7,8-diammoniononanoate + CO2 + ATP = (4R,5S)-dethiobiotin + ADP + phosphate + 3 H(+). The protein operates within cofactor biosynthesis; biotin biosynthesis; biotin from 7,8-diaminononanoate: step 1/2. Its function is as follows. Catalyzes a mechanistically unusual reaction, the ATP-dependent insertion of CO2 between the N7 and N8 nitrogen atoms of 7,8-diaminopelargonic acid (DAPA, also called 7,8-diammoniononanoate) to form a ureido ring. The chain is ATP-dependent dethiobiotin synthetase BioD from Mycobacterium tuberculosis (strain ATCC 25177 / H37Ra).